The following is a 347-amino-acid chain: Inositol 2-dehydrogenase (347 aa).

The protein belongs to the Gfo/Idh/MocA family. As to quaternary structure, homotetramer.

The enzyme catalyses myo-inositol + NAD(+) = scyllo-inosose + NADH + H(+). In terms of biological role, involved in the oxidation of myo-inositol (MI) to 2-keto-myo-inositol (2KMI or 2-inosose). The sequence is that of Inositol 2-dehydrogenase from Rubrobacter xylanophilus (strain DSM 9941 / JCM 11954 / NBRC 16129 / PRD-1).